The following is a 263-amino-acid chain: Auxin-responsive protein IAA3 (263 aa).

Disordered stretches follow at residues 1–54 and 76–121; these read MSPP…RRPA and RVFP…PAAK. Over residues 28-38 the composition is skewed to basic and acidic residues; the sequence is RADDVDLKGTE. An EAR-like (transcriptional repression) motif is present at residues 39–43; the sequence is LRLGL. In terms of domain architecture, PB1 spans 158–245; that stretch reads FLYVKVSMDG…SCRRLRIMKG (88 aa).

This sequence belongs to the Aux/IAA family. Homodimers and heterodimers. Highly expressed in flowers. Expressed in roots and shoots.

The protein localises to the nucleus. Aux/IAA proteins are short-lived transcriptional factors that function as repressors of early auxin response genes at low auxin concentrations. The chain is Auxin-responsive protein IAA3 (IAA3) from Oryza sativa subsp. japonica (Rice).